Consider the following 295-residue polypeptide: HTH-type transcriptional regulator ShiR (295 aa).

One can recognise an HTH lysR-type domain in the interval 1–58; it reads MEIRWLEGFIAVAEELHFSNAAIRLGMPQSPLSQLIRRLESELGQKLFDRSTRSVELT. Positions 18–37 form a DNA-binding region, H-T-H motif; it reads FSNAAIRLGMPQSPLSQLIR.

This sequence belongs to the LysR transcriptional regulatory family.

Activates expression of the shikimate transporter ShiA in the presence of shikimate. Binds to the shiA promoter region. The sequence is that of HTH-type transcriptional regulator ShiR from Corynebacterium glutamicum (strain R).